Consider the following 287-residue polypeptide: Pyridoxal kinase PdxY (287 aa).

Substrate-binding positions include S10 and 45-46 (TQ). ATP-binding positions include D112, A144, E149, K182, and 209 to 212 (RPLV). D224 contributes to the substrate binding site.

Belongs to the pyridoxine kinase family. PdxY subfamily. As to quaternary structure, homodimer. Mg(2+) serves as cofactor.

The catalysed reaction is pyridoxal + ATP = pyridoxal 5'-phosphate + ADP + H(+). It participates in cofactor metabolism; pyridoxal 5'-phosphate salvage; pyridoxal 5'-phosphate from pyridoxal: step 1/1. In terms of biological role, pyridoxal kinase involved in the salvage pathway of pyridoxal 5'-phosphate (PLP). Catalyzes the phosphorylation of pyridoxal to PLP. In Shigella boydii serotype 4 (strain Sb227), this protein is Pyridoxal kinase PdxY.